The chain runs to 500 residues: Glycerol kinase (500 aa).

Residue Thr15 coordinates ADP. ATP is bound by residues Thr15, Thr16, and Ser17. Position 15 (Thr15) interacts with sn-glycerol 3-phosphate. Arg19 contacts ADP. Sn-glycerol 3-phosphate contacts are provided by Arg85, Glu86, Tyr137, and Asp245. Residues Arg85, Glu86, Tyr137, Asp245, and Gln246 each contribute to the glycerol site. Residues Thr267 and Gly310 each coordinate ADP. Residues Thr267, Gly310, Gln314, and Gly411 each coordinate ATP. Gly411 and Asn415 together coordinate ADP.

This sequence belongs to the FGGY kinase family.

The enzyme catalyses glycerol + ATP = sn-glycerol 3-phosphate + ADP + H(+). Its pathway is polyol metabolism; glycerol degradation via glycerol kinase pathway; sn-glycerol 3-phosphate from glycerol: step 1/1. Its activity is regulated as follows. Inhibited by fructose 1,6-bisphosphate (FBP). Functionally, key enzyme in the regulation of glycerol uptake and metabolism. Catalyzes the phosphorylation of glycerol to yield sn-glycerol 3-phosphate. The chain is Glycerol kinase from Aeromonas hydrophila subsp. hydrophila (strain ATCC 7966 / DSM 30187 / BCRC 13018 / CCUG 14551 / JCM 1027 / KCTC 2358 / NCIMB 9240 / NCTC 8049).